The sequence spans 467 residues: Ankyrin repeat and SOCS box protein 10 (467 aa).

7 ANK repeats span residues 115–144 (ELTT…KPDS), 147–176 (GGRT…DPNT), 180–209 (DGKR…QVDG), 214–243 (EEET…CPDV), 247–289 (EGWT…DADA), 293–322 (DKQR…NANA), and 326–361 (GGHT…AVRV). An SOCS box domain is found at 412–467 (YSSLFALVRQPRSLQHLCRCALRSHLEGCLPHALPRLPLPPRMLRFLQLDFEDLLY).

This sequence belongs to the ankyrin SOCS box (ASB) family.

It localises to the nucleus. The protein localises to the cytoplasm. Its pathway is protein modification; protein ubiquitination. In terms of biological role, may be a substrate-recognition component of a SCF-like ECS (Elongin-Cullin-SOCS-box protein) E3 ubiquitin-protein ligase complex which mediates the ubiquitination and subsequent proteasomal degradation of target proteins. The polypeptide is Ankyrin repeat and SOCS box protein 10 (Asb10) (Mus musculus (Mouse)).